The primary structure comprises 317 residues: Taste receptor type 2 member 14 (317 aa).

Topologically, residues 1–7 (MGGVIKS) are extracellular. The chain crosses the membrane as a helical span at residues 8 to 28 (IFTFVLIVEFIIGNLGNSFIA). The Cytoplasmic portion of the chain corresponds to 29–55 (LVNCIDWVKGRKISSVDRILTALAISK). A helical membrane pass occupies residues 56–76 (ISLVWLIFGSWCVSVFFPALF). Over 77 to 87 (ATEKMFRMLTN) the chain is Extracellular. 2 residues coordinate cholesterol: Thr86 and Trp89. The chain crosses the membrane as a helical span at residues 88–108 (IWTVINHFSVWLATGLGTFYF). Topologically, residues 109 to 129 (LKIANFSNSIFLYLKWRVKKV) are cytoplasmic. The chain crosses the membrane as a helical span at residues 130-150 (VLVLLLVTSVFLFLNIALINI). At 151-184 (HINASINGYRRNKTCSSDSSNFTRFSSLIVLTST) the chain is on the extracellular side. 3 N-linked (GlcNAc...) asparagine glycosylation sites follow: Asn153, Asn162, and Asn171. Val180 is a cholesterol binding site. The helical transmembrane segment at 185–205 (VFIFIPFTLSLAMFLLLIFSM) threads the bilayer. The Cytoplasmic segment spans residues 206–232 (WKHRKKMQHTVKRSGDASTKAHRGVKS). Residues 233-253 (MMTFFLLYAIFSLSFFISVWT) form a helical membrane-spanning segment. The Extracellular portion of the chain corresponds to 254–261 (SERLEENL). The chain crosses the membrane as a helical span at residues 262-282 (IILSQVMGMAYPSCHSCVLIL). The cholesterol site is built by Ser265 and Met268. Residues 283–317 (GNKKLRQASLSVLLWLRYMFKDGEPSGHKEFRESS) lie on the Cytoplasmic side of the membrane.

This sequence belongs to the G-protein coupled receptor T2R family. As to quaternary structure, core component of the TAS2R14-GNAI1 complex, consisting of TAS2R14, GNAI1, GNB1 and GNG2; within the complex interacts with GNAI1. Core component of the TAS2R14-GNAT3 complex, consisting of TAS2R14, GNAT3, GNB1 and GNG2; within the complex interacts with GNAT3. Core component of the TAS2R14-GNAS2 complex, consisting of TAS2R14, GNAS2, GNB1 and GNG2; within the complex interacts with GNAS2.

It is found in the membrane. The catalysed reaction is Ca(2+)(in) = Ca(2+)(out). It catalyses the reaction 3',5'-cyclic AMP(in) = 3',5'-cyclic AMP(out). With respect to regulation, basal activity is enhanced by binding to bitter tastants, such as flufenamic acid and aristolochic acid. Regulated by cholesterol in a concentration-dependent manner. Gustducin-linked G-protein coupled receptor that plays a role in the perception of bitterness. The activity of this receptor stimulates GNAT3, activating the gustducin G-protein pathway. Likely plays a role in sensing the chemical composition of the gastrointestinal content and other extra-oral tissues via the inhibitory G-protein pathways. The protein is Taste receptor type 2 member 14 (TAS2R14) of Pan paniscus (Pygmy chimpanzee).